A 552-amino-acid polypeptide reads, in one-letter code: MRFQSINEINLTSVWAQLHLHQRSTRHVEMRDLFEAESDRFLNFSIDLNGFLLDFSKNRITGRSLDLLVELSKVAGLSDWVEAARLGEQINTSEHRAVMHFALRASVDDVYSVDGQNVVPVVHRELRRCFDFSEKIRQKIWCGFNGSPIRDVVNIGIGGSDLGPRLAVQALHPYALSDIRVHFVSNLDGADLAQTLEGLDQATTLFIVSSKSFSTPETLDNAYAAKAWFLQKAQGSDVSKHFVAISSNVEAVKDFGIAPEQMFRFWDWVGGRYSVWSAIGLSVMIAIGERHFRAFLDGAREMDQHFFTAPHEKNIPVVMALLGVWYNTFYGAHTHAIMPYAHGLARLPAYLQQLDMESNGKRVGRFGEMLDFDTGPVVWGEVGVNSQHAFFQLLHQGTRLVPCDFILPLRSHYAIGQHHQQLVANCLAQTEALMRGKTDTEVLEELQAAGVTGELLDALLPQKVFPGNQPSNTIVIDELSPHFLGMLLAAYEHKVFVQGVIWGINSFDQWGVEYGKQLAKRIAPELASTKPPKHDSSTNALIERYRTRGCRS.

Residue Glu-357 is the Proton donor of the active site. Active-site residues include His-388 and Lys-516. The interval 525–552 (ELASTKPPKHDSSTNALIERYRTRGCRS) is disordered.

This sequence belongs to the GPI family.

Its subcellular location is the cytoplasm. The enzyme catalyses alpha-D-glucose 6-phosphate = beta-D-fructose 6-phosphate. It functions in the pathway carbohydrate biosynthesis; gluconeogenesis. It participates in carbohydrate degradation; glycolysis; D-glyceraldehyde 3-phosphate and glycerone phosphate from D-glucose: step 2/4. Catalyzes the reversible isomerization of glucose-6-phosphate to fructose-6-phosphate. This is Glucose-6-phosphate isomerase from Laribacter hongkongensis (strain HLHK9).